The sequence spans 688 residues: Phosphoinositide 3-phosphatase (688 aa).

The 483-residue stretch at 155–637 folds into the Myotubularin phosphatase domain; the sequence is SWDIYDPIKE…KKVQWWWQLY (483 aa). C397 functions as the Phosphocysteine intermediate in the catalytic mechanism. Positions 647-668 are enriched in basic and acidic residues; it reads ELRHKRDSVPISVDKKSKEHSN. The tract at residues 647–672 is disordered; the sequence is ELRHKRDSVPISVDKKSKEHSNSDGG.

Belongs to the protein-tyrosine phosphatase family. Non-receptor class myotubularin subfamily.

The protein localises to the cytoplasm. It catalyses the reaction a 1,2-diacyl-sn-glycero-3-phospho-(1D-myo-inositol-3-phosphate) + H2O = a 1,2-diacyl-sn-glycero-3-phospho-(1D-myo-inositol) + phosphate. Its function is as follows. Lipid phosphatase which dephosphorylates phosphatidylinositol 3-monophosphate (PI3P). Involved in the control of PI3P-dependent signaling and in the maintenance of endosomal system integrity. The polypeptide is Phosphoinositide 3-phosphatase (Saccharomyces cerevisiae (strain ATCC 204508 / S288c) (Baker's yeast)).